The following is a 411-amino-acid chain: Putative ion-transport protein YfeO (411 aa).

The next 11 helical transmembrane spans lie at 9-29, 54-74, 99-119, 149-169, 186-206, 223-243, 258-278, 296-316, 322-342, 343-363, and 386-406; these read MLLL…VLIA, DSPF…GLII, ALPG…SLGP, ILAS…AALI, LFAP…FFHP, IASG…AVWC, VLIL…GGPL, LGAG…VIAA, GGRI…LHAH, VEAV…VLVV, and LLCI…LLAA.

This sequence belongs to the chloride channel (TC 2.A.49) family.

It is found in the cell membrane. The polypeptide is Putative ion-transport protein YfeO (Salmonella schwarzengrund (strain CVM19633)).